Here is a 293-residue protein sequence, read N- to C-terminus: Small ribosomal subunit protein uS2 (293 aa).

Positions 265 to 293 (DGGDWAASSAPAPGGENWAEAQPAEGAKW) are disordered.

It belongs to the universal ribosomal protein uS2 family. Component of the small ribosomal subunit. Mature ribosomes consist of a small (40S) and a large (60S) subunit. The 40S subunit contains about 33 different proteins and 1 molecule of RNA (18S). The 60S subunit contains about 49 different proteins and 3 molecules of RNA (25S, 5.8S and 5S). Interacts with rps21.

It localises to the cytoplasm. Functionally, required for the assembly and/or stability of the 40S ribosomal subunit. Required for the processing of the 20S rRNA-precursor to mature 18S rRNA in a late step of the maturation of 40S ribosomal subunits. This is Small ribosomal subunit protein uS2 (rps0) from Emericella nidulans (strain FGSC A4 / ATCC 38163 / CBS 112.46 / NRRL 194 / M139) (Aspergillus nidulans).